A 378-amino-acid chain; its full sequence is MIMALSKTFGQKPVKFQLEEDGDYYMIGSEVGNYLRMFRGSLYKRYPSLWRRLATVEERKKIVASSHGKKYHGHTTLATSVTLLKASEVEEILDGNDEKYKAVSISTEPPTYLREQKAKRNSQWVPTLPNSSHHLDAVPCSTTINRNRMGRDKKRTFPLCFDDHDPAVIHENAAQPEVLVPIRLDMEIDGQKLRDAFTWNMNEKLMTPEMFAEILCDDLDLNPLAFVPAIASAIRQQIESYPTDSILEDQSDQRVIIKLNIHVGNISLVDQFEWDMSEKENSPEKFALKLCSELGLGGEFVTTIAYSIRGQLSWHQKTYAFSENPLPTVEIAIRNTGDADQWCPLLETLTDAEMEKKIRDQDRNTRRMRRLANTAPAW.

Residues 1–106 (MIMALSKTFG…DEKYKAVSIS (106 aa)) form a DNA-binding region.

This sequence belongs to the SNF5 family. As to quaternary structure, component of the multiprotein chromatin-remodeling complexes SWI/SNF. Component of neural progenitors-specific chromatin remodeling complex (npBAF complex) and the neuron-specific chromatin remodeling complex (nBAF complex). Component of the BAF (SWI/SNF) chromatin remodeling complex. Component of the SWI/SNF-B (PBAF) chromatin remodeling complex. Binds to double-stranded DNA.

It is found in the nucleus. Involved in chromatin-remodeling. Core component of the BAF (SWI/SNF) complex. This ATP-dependent chromatin-remodeling complex plays important roles in cell proliferation and differentiation, in cellular antiviral activities and inhibition of tumor formation. Belongs to the neural progenitors-specific chromatin remodeling complex (npBAF complex) and the neuron-specific chromatin remodeling complex (nBAF complex) and may play a role in neural development. The chain is SWI/SNF-related matrix-associated actin-dependent regulator of chromatin subfamily B member 1 (smarcb1) from Xenopus laevis (African clawed frog).